Here is a 103-residue protein sequence, read N- to C-terminus: L-rhamnose mutarotase (103 aa).

Residue Y18 coordinates substrate. H22 acts as the Proton donor in catalysis. Substrate-binding positions include Y41 and 76-77 (WW).

This sequence belongs to the rhamnose mutarotase family. Homodimer.

Its subcellular location is the cytoplasm. It catalyses the reaction alpha-L-rhamnose = beta-L-rhamnose. The protein operates within carbohydrate metabolism; L-rhamnose metabolism. Functionally, involved in the anomeric conversion of L-rhamnose. The chain is L-rhamnose mutarotase from Enterococcus faecalis (strain ATCC 700802 / V583).